The sequence spans 215 residues: Variable small protein 6 (215 aa).

The first 18 residues, 1-18 (MRKRISAIIMTLFMVFMS), serve as a signal peptide directing secretion. Residue Cys19 is the site of N-palmitoyl cysteine attachment. Cys19 is lipidated: S-diacylglycerol cysteine.

This sequence belongs to the variable small protein (Vsp) family.

The protein localises to the cell outer membrane. Functionally, the Vlp and Vsp proteins are antigenically distinct proteins, only one vlp or vsp gene is transcriptionally active at any one time. Switching between these genes is a mechanism of host immune response evasion. In Borrelia hermsii, this protein is Variable small protein 6.